The primary structure comprises 1026 residues: SWI/SNF-related matrix-associated actin-dependent regulator of chromatin subfamily A containing DEAD/H box 1 (1026 aa).

M1 carries the post-translational modification N-acetylmethionine. The tract at residues 1–82 is disordered; sequence MNLFNLDRFR…DNERKASISY (82 aa). Residues 7-19 are compositionally biased toward basic and acidic residues; sequence DRFRFEKRNKIEE. At T54 the chain carries Phosphothreonine. A Phosphoserine modification is found at S57. Position 71 is a phosphothreonine (T71). K77 participates in a covalent cross-link: Glycyl lysine isopeptide (Lys-Gly) (interchain with G-Cter in SUMO2). Phosphoserine is present on S79. A Glycyl lysine isopeptide (Lys-Gly) (interchain with G-Cter in SUMO2) cross-link involves residue K84. 5 positions are modified to phosphoserine: S124, S127, S132, S146, and S152. Residues 157-199 enclose the CUE 1 domain; it reads LKDAKLQTLKELFPQRSDNDLLKLIESTSTMDGAIAAALLMFG. Disordered regions lie at residues 203–251 and 302–328; these read GGPR…NWEK and SQSE…KTKL. Phosphoserine occurs at positions 211 and 214. At Y217 the chain carries Phosphotyrosine. The segment covering 226 to 238 has biased composition (basic and acidic residues); sequence QSIKKTRLDHGEE. 2 positions are modified to phosphoserine: S239 and S242. A CUE 2 domain is found at 251-294; sequence KQESIVLKLQKEFPNFDKQELREVLKEHEWMYTEALESLKVFAE. S302 carries the post-translational modification Phosphoserine. Residues 314-323 are compositionally biased toward polar residues; sequence SRSQNYPKNA. K335 is covalently cross-linked (Glycyl lysine isopeptide (Lys-Gly) (interchain with G-Cter in SUMO2)). Residues 354–373 are disordered; sequence VVEDSEYDSGSDVGSSLDED. K471 is covalently cross-linked (Glycyl lysine isopeptide (Lys-Gly) (interchain with G-Cter in SUMO2)). The Helicase ATP-binding domain maps to 509–677; that stretch reads ALVHKHGLNG…MSLLNFVMPH (169 aa). Residue 521–529 coordinates ATP; sequence ADEMGLGKT. Residues 628–631 carry the DEGH box motif; that stretch reads DEGH. A Nuclear localization signal motif is present at residues 721–738; it reads RRVKEEVLKQLPPKKDRI. Residue K724 forms a Glycyl lysine isopeptide (Lys-Gly) (interchain with G-Cter in SUMO2) linkage. The Helicase C-terminal domain maps to 858–1010; it reads VLGCILSELK…MTTVDEGDEG (153 aa). 897 to 904 is an ATP binding site; the sequence is YLRLDGKT. Residue K996 forms a Glycyl lysine isopeptide (Lys-Gly) (interchain with G-Cter in SUMO2) linkage. A DEGD box motif is present at residues 1005–1008; that stretch reads DEGD.

This sequence belongs to the SNF2/RAD54 helicase family. As to quaternary structure, binds to DNA preferentially in the vicinity of transcriptional start sites. Interacts with MSH2 and TRIM28. Part of a complex composed of TRIM28, HDAC1, HDAC2 and EHMT2. Interacts with PCNA. As to expression, isoform 1 is expressed ubiquitously. Isoform 3 is expressed mainly in skin and esophagus. Expressed in fibroblasts and keratinocytes (at protein level).

The protein resides in the nucleus. It localises to the chromosome. It carries out the reaction ATP + H2O = ADP + phosphate + H(+). DNA helicase that possesses intrinsic ATP-dependent nucleosome-remodeling activity and is both required for DNA repair and heterochromatin organization. Promotes DNA end resection of double-strand breaks (DSBs) following DNA damage: probably acts by weakening histone DNA interactions in nucleosomes flanking DSBs. Required for the restoration of heterochromatin organization after replication. Acts at replication sites to facilitate the maintenance of heterochromatin by directing H3 and H4 histones deacetylation, H3 'Lys-9' trimethylation (H3K9me3) and restoration of silencing. The sequence is that of SWI/SNF-related matrix-associated actin-dependent regulator of chromatin subfamily A containing DEAD/H box 1 from Homo sapiens (Human).